The primary structure comprises 714 residues: MSKKNPGDPRVKKNAFVHKLYTMLHDPALSHLIWWTNRNGEQNTFALCPGKEFADCLTQYFKHGNVASFVRQLHMYGFHKVSDPLPITYPPNGNNNNNNNNKEVPPVWEFKHSSGRFKRGDETSLVYIKRRSSSNHTSGSTIYAEPIYNPLLTNPYNQPQFMYQDYSMGPPVEVQQFYNYQNQPLMYYQQPPGQVPPPPPPSLPPHQQPEMALQYHQYNNYQQPPPAPPAPPPQPGNVLFGYQQVAPPQQPGSTVQQIPANAPPTLDQTQPLSYTPQLEYQQQQYPQPPLPPPPPQLQLQTSPGIPKVNDNLSRPSPNEQHLQFRKIWPDENNEANSKPRNPSLMFDPLLRVNSEGSPKTQPNHSVSLLNNEVRSESSTSSSSTTVTSTALPPPSAIDRSVSLVGGSPFDLSSRMNNQQSFNRTPSISTPPTQNGRLPKISSPLIPSNTESQSPTMVTGTDNDVGVTSKGSTSIISVSKKPSVFSNSLQERLRPSMFEYHPIGNNLSKDVLTIPKISTNSNSGSRTTSQSSMSSASALSSKKSSLSSISSTHGNLSILNSTNYRSTSVGGSGSGPFSTSTSTSTTSPTLSSLLHHPQHEPQNSTIANGTSIRSSISSSQSISSPPLTTTTTTTTTDQRQLSNSPISRQQQQQPNNNTNKKVSVTSLLLPSHSQSQGYAQPLYKSSVIAEEENSTTSSGGGYRSKSDDDTDNMNK.

The DNA-binding element occupies 15–134 (AFVHKLYTML…LVYIKRRSSS (120 aa)). Disordered regions lie at residues 187–467 (YYQQ…VGVT), 565–658 (STSV…NNTN), and 670–714 (SHSQ…NMNK). Pro residues-rich tracts occupy residues 193-207 (GQVP…PPHQ) and 223-235 (QPPP…PPQP). Residues 266–275 (LDQTQPLSYT) show a composition bias toward polar residues. The segment covering 276–285 (PQLEYQQQQY) has biased composition (low complexity). Positions 286–296 (PQPPLPPPPPQ) are enriched in pro residues. Polar residues-rich tracts occupy residues 310–321 (DNLSRPSPNEQH) and 354–372 (SEGS…LNNE). The span at 376–389 (ESSTSSSSTTVTST) shows a compositional bias: low complexity. Composition is skewed to polar residues over residues 413 to 435 (SRMN…TQNG) and 444 to 461 (LIPS…TGTD). Residues 574–591 (GPFSTSTSTSTTSPTLSS) are compositionally biased toward low complexity. A compositionally biased stretch (polar residues) spans 599 to 608 (EPQNSTIANG). Composition is skewed to low complexity over residues 609 to 641 (TSIR…RQLS) and 648 to 658 (QQQQQPNNNTN). Positions 703–714 (SKSDDDTDNMNK) are enriched in basic and acidic residues.

The protein belongs to the HSF family.

The protein resides in the nucleus. Its function is as follows. Transcription factor that plays a role of activator of filamentous growth and which is involved in invasive growth at a high temperature. Required for human oral epithelium colonization and damage. Promotes filamentous growth in EFG1- and FLO8-dependent manners. Antagonizes functions of SFL1. The protein is Transcription factor SFL2 (SFL2) of Candida albicans (strain SC5314 / ATCC MYA-2876) (Yeast).